The primary structure comprises 250 residues: Small ribosomal subunit protein uS2 (250 aa).

The segment at 225-250 is disordered; the sequence is GAQGGRQARGEDLGAAVEAPSEDALA.

The protein belongs to the universal ribosomal protein uS2 family.

In Rhizorhabdus wittichii (strain DSM 6014 / CCUG 31198 / JCM 15750 / NBRC 105917 / EY 4224 / RW1) (Sphingomonas wittichii), this protein is Small ribosomal subunit protein uS2.